A 314-amino-acid chain; its full sequence is Putative 4-hydroxy-2-oxoglutarate aldolase, mitochondrial (314 aa).

50-51 (TN) lines the substrate pocket. Lys-171 functions as the Schiff-base intermediate with substrate in the catalytic mechanism.

Belongs to the DapA family.

The enzyme catalyses (4S)-4-hydroxy-2-oxoglutarate = glyoxylate + pyruvate. The catalysed reaction is (4R)-4-hydroxy-2-oxoglutarate = glyoxylate + pyruvate. Its function is as follows. May catalyze the final step in the metabolic pathway of hydroxyproline. The polypeptide is Putative 4-hydroxy-2-oxoglutarate aldolase, mitochondrial (Coccidioides immitis (strain RS) (Valley fever fungus)).